The primary structure comprises 675 residues: Polyphosphate kinase (675 aa).

N42 serves as a coordination point for ATP. 2 residues coordinate Mg(2+): R372 and R401. H431 acts as the Phosphohistidine intermediate in catalysis. Residues Y464, R558, and H586 each contribute to the ATP site.

Belongs to the polyphosphate kinase 1 (PPK1) family. It depends on Mg(2+) as a cofactor. In terms of processing, an intermediate of this reaction is the autophosphorylated ppk in which a phosphate is covalently linked to a histidine residue through a N-P bond.

The enzyme catalyses [phosphate](n) + ATP = [phosphate](n+1) + ADP. Functionally, catalyzes the reversible transfer of the terminal phosphate of ATP to form a long-chain polyphosphate (polyP). In Helicobacter pylori (strain J99 / ATCC 700824) (Campylobacter pylori J99), this protein is Polyphosphate kinase.